A 69-amino-acid chain; its full sequence is Small ribosomal subunit protein bS21 (69 aa).

This sequence belongs to the bacterial ribosomal protein bS21 family.

This Hyphomonas neptunium (strain ATCC 15444) protein is Small ribosomal subunit protein bS21.